Reading from the N-terminus, the 184-residue chain is Photosystem I assembly protein Ycf4 (184 aa).

2 helical membrane-spanning segments follow: residues 22 to 42 (FFWA…GTSS) and 57 to 77 (IPFF…LFIS).

The protein belongs to the Ycf4 family.

It localises to the plastid. The protein resides in the chloroplast thylakoid membrane. Its function is as follows. Seems to be required for the assembly of the photosystem I complex. This Ceratophyllum demersum (Rigid hornwort) protein is Photosystem I assembly protein Ycf4.